We begin with the raw amino-acid sequence, 315 residues long: Sulfate adenylyltransferase subunit 2 1 (315 aa).

Residues 287–315 (DSSSSERQGRAIDHDQSGSMERKKREGYF) are disordered. The span at 293 to 315 (RQGRAIDHDQSGSMERKKREGYF) shows a compositional bias: basic and acidic residues.

It belongs to the PAPS reductase family. CysD subfamily. As to quaternary structure, heterodimer composed of CysD, the smaller subunit, and CysN.

The catalysed reaction is sulfate + ATP + H(+) = adenosine 5'-phosphosulfate + diphosphate. Its pathway is sulfur metabolism; hydrogen sulfide biosynthesis; sulfite from sulfate: step 1/3. Functionally, with CysN forms the ATP sulfurylase (ATPS) that catalyzes the adenylation of sulfate producing adenosine 5'-phosphosulfate (APS) and diphosphate, the first enzymatic step in sulfur assimilation pathway. APS synthesis involves the formation of a high-energy phosphoric-sulfuric acid anhydride bond driven by GTP hydrolysis by CysN coupled to ATP hydrolysis by CysD. The sequence is that of Sulfate adenylyltransferase subunit 2 1 from Alkalilimnicola ehrlichii (strain ATCC BAA-1101 / DSM 17681 / MLHE-1).